The primary structure comprises 165 residues: Protein SprT (165 aa).

Residues 20–163 (ENLAQANLKL…RCVHCGEPLV (144 aa)) form the SprT-like domain. His-78 is a Zn(2+) binding site. Residue Glu-79 is part of the active site. A Zn(2+)-binding site is contributed by His-82.

The protein belongs to the SprT family. Requires Zn(2+) as cofactor.

It localises to the cytoplasm. This is Protein SprT from Salmonella arizonae (strain ATCC BAA-731 / CDC346-86 / RSK2980).